The following is a 345-amino-acid chain: MESGRLIFSTAGSGAGQMLFLDCGAGGGGGGVGGGAMFHRGARPVLGMEEGGRGVKRPFFTTPDELLEEEYYDEQLPEKKRRLTPEQVHLLERSFEEENKLEPERKTELARKLGLQPRQVAVWFQNRRARWKTKQLERDFDRLKASFDALRADHDALLQDNHRLHSQVMSLTEKLQEKETTTEGSAGAAVDVPGLPAAADVKVAVPDAEEPALEEAAAAFEEQQEQQVKAEDRLSTGSGGSAVVDTDAQLVVGCGRQHLAAVDSSVESYFPGGDEYHDCVMGPMDHAAGGIQSEEDDGAGSDEGCSYYADDAGVLFADHGHHHHHQHADDDEEDGQQISCWWMWN.

The homeobox DNA-binding region spans 76–135 (LPEKKRRLTPEQVHLLERSFEEENKLEPERKTELARKLGLQPRQVAVWFQNRRARWKTKQ). The tract at residues 134 to 178 (KQLERDFDRLKASFDALRADHDALLQDNHRLHSQVMSLTEKLQEK) is leucine-zipper. A disordered region spans residues 220–241 (FEEQQEQQVKAEDRLSTGSGGS).

It belongs to the HD-ZIP homeobox family. Class I subfamily. As to expression, expressed in seedlings, stems, leaf sheaths and blades and panicles.

The protein localises to the nucleus. Probable transcription factor. The chain is Homeobox-leucine zipper protein HOX16 (HOX16) from Oryza sativa subsp. indica (Rice).